A 775-amino-acid polypeptide reads, in one-letter code: MAADSEPESEVGCPLTPLPPVSIAIRFTYVLQDWQQYFWPQQPPDIDALVGGEVGGLEFGKLPFGACEDPISELHLATTWPHLTEGIIVDNDVYSDLDPVQAPHWSVRVRKADNPQCLLGDFVTEFLKICRRKESTDEILGRSTFEEEGRVADITHALSKLTEPAPVPIHKLSVSNMVHTAKKKIRKHRGEESPLNNDVLNTILLFLFPDAASEKPLDGTTSVDNSNPAAEAGDYTLYNQFKSAPSDSLTYKLALCLCMINFYHGGLKGVAHLWQEFVLEMRFRWENNFLIPGLASGPPDLRCCLLHQKLQMLNCCIERKKARDEGKKTSPSDSMTKAYPADAGKAGGQLGLDHLRDTEKEKGEAGKSWDSWSDSEEEFFECLSDAEDLRGNGQESTKKGGPKDMAPLKPEGRLHQHGKLTLLRNGEPLYIPVTQEPAPMTEDLLEEQSEVLAKLGTSAEGAHLRARMQSACLLSDMESFKAANPGCCLEDFVRWYSPRDYIEEEVTDEKGNVVLKGELSARMKIPSNMWVEAWETAKPVPARRQRRLFDDTREAEKVLHYLAMQKPADLARHLLPCVIHAAVLKVKEEESLENIPSVKKIIKQIIAHSSKVLRFPSPEDKKLEEIILQITTVEAIIARARSLKAKFGTEKCEHEEEKEDLERFVSCLLEQPEVAVTGAGRGHAGRIIHKLFVNAQRAAAVALPEEELKRSGCPEERRQTLVSDFPPPAGRELILRATVPRPAPYSKALPQRMYSVLTKEDFRLAGAFSSDTSFF.

A phosphoserine mark is found at Ser173, Ser330, Ser373, Ser375, and Ser384. Residues Asp324–Gly351 form a disordered region. The tract at residues Ala386–Leu414 is disordered. Residue Ser458 is modified to Phosphoserine.

It belongs to the Rab3-GAP catalytic subunit family. The Rab3 GTPase-activating complex is a heterodimer composed of Rab3gap1 and Rab3gap2. The Rab3 GTPase-activating complex interacts with DMXL2. Interacts with LMAN1.

The protein resides in the cytoplasm. It is found in the endoplasmic reticulum. The protein localises to the golgi apparatus. It localises to the cis-Golgi network. In terms of biological role, catalytic subunit of the Rab3 GTPase-activating (Rab3GAP) complex composed of RAB3GAP1 and RAB3GAP2, which has GTPase-activating protein (GAP) activity towards various Rab3 subfamily members (RAB3A, RAB3B, RAB3C and RAB3D), RAB5A and RAB43, and guanine nucleotide exchange factor (GEF) activity towards RAB18. As part of the Rab3GAP complex, acts as a GAP for Rab3 proteins by converting active RAB3-GTP to the inactive form RAB3-GDP. Rab3 proteins are involved in regulated exocytosis of neurotransmitters and hormones. The Rab3GAP complex, acts as a GEF for RAB18 by promoting the conversion of inactive RAB18-GDP to the active form RAB18-GTP. Recruits and stabilizes RAB18 at the cis-Golgi membrane where RAB18 is most likely activated. Also involved in RAB18 recruitment at the endoplasmic reticulum (ER) membrane where it maintains proper ER structure. Required for normal eye and brain development. May participate in neurodevelopmental processes such as proliferation, migration and differentiation before synapse formation, and non-synaptic vesicular release of neurotransmitters. This Rattus norvegicus (Rat) protein is Rab3 GTPase-activating protein catalytic subunit.